A 217-amino-acid polypeptide reads, in one-letter code: 3-demethoxyubiquinol 3-hydroxylase (217 aa).

Fe cation contacts are provided by Glu-66, Glu-96, His-99, Glu-148, Glu-180, and His-183.

Belongs to the COQ7 family. It depends on Fe cation as a cofactor.

The protein localises to the cell membrane. It carries out the reaction a 5-methoxy-2-methyl-3-(all-trans-polyprenyl)benzene-1,4-diol + AH2 + O2 = a 3-demethylubiquinol + A + H2O. It functions in the pathway cofactor biosynthesis; ubiquinone biosynthesis. Functionally, catalyzes the hydroxylation of 2-nonaprenyl-3-methyl-6-methoxy-1,4-benzoquinol during ubiquinone biosynthesis. The protein is 3-demethoxyubiquinol 3-hydroxylase of Ralstonia pickettii (strain 12J).